The following is a 241-amino-acid chain: Probable transcriptional regulatory protein Maqu_2154 (241 aa).

The protein belongs to the TACO1 family.

The protein resides in the cytoplasm. This Marinobacter nauticus (strain ATCC 700491 / DSM 11845 / VT8) (Marinobacter aquaeolei) protein is Probable transcriptional regulatory protein Maqu_2154.